Here is a 273-residue protein sequence, read N- to C-terminus: uncharacterized protein (273 aa).

It belongs to the PhyH family.

This is an uncharacterized protein from Mycobacterium tuberculosis (strain ATCC 25618 / H37Rv).